We begin with the raw amino-acid sequence, 309 residues long: Taste receptor type 2 member 113 (309 aa).

Residues 1–8 (MVAVLQST) are Extracellular-facing. The helical transmembrane segment at 9 to 29 (FAIIFSMEFIVGTLGNGFIIL) threads the bilayer. The Cytoplasmic segment spans residues 30–55 (MTCIDWVRRRKISLVDQILTALAITR). The chain crosses the membrane as a helical span at residues 56–76 (ITLILLVFIDWWVSVLFPALH). At 77–101 (ETGKILRMYFISWTVINHCNLWLTA) the chain is on the extracellular side. The helical transmembrane segment at 102–122 (SLSIIYFLKIASFSSIIFLYL) threads the bilayer. Over 123 to 127 (KFRVK) the chain is Cytoplasmic. Residues 128–148 (NVVFVTLLVSLFFLFINTAIV) form a helical membrane-spanning segment. Residues 149–185 (NVYFDVCFDGVQRNVSQVSRLYNHEQICKFLSFTNPM) are Extracellular-facing. Asparagine 162 carries N-linked (GlcNAc...) asparagine glycosylation. A helical transmembrane segment spans residues 186–206 (FAFIPFVTSMATFFLLIFSLW). The Cytoplasmic segment spans residues 207–229 (RHLKNMKHNAEGCRDVSTIVHIR). The helical transmembrane segment at 230–250 (ALQTIIVSVVLYSTFFLSFFV) threads the bilayer. Residues 251–262 (KVWSSGSPERYL) are Extracellular-facing. The chain crosses the membrane as a helical span at residues 263-283 (IFLFVWALGNAVLPAHTFVLI). Residues 284 to 309 (WGNCRLRWASLSLMLWLRYRFKNIDV) lie on the Cytoplasmic side of the membrane.

Belongs to the G-protein coupled receptor T2R family.

The protein localises to the membrane. Its function is as follows. Putative taste receptor which may play a role in the perception of bitterness. This Rattus norvegicus (Rat) protein is Taste receptor type 2 member 113.